The sequence spans 718 residues: Neutral ceramidase B (718 aa).

Residues 1-20 (MINSFKKLIILISLVIILLS) form the signal peptide. N-linked (GlcNAc...) asparagine glycans are attached at residues Asn224 and Asn252. Catalysis depends on Ser298, which acts as the Nucleophile. Residues Asn358, Asn378, Asn391, Asn421, Asn422, Asn577, Asn610, and Asn614 are each glycosylated (N-linked (GlcNAc...) asparagine).

The protein belongs to the neutral ceramidase family.

It localises to the secreted. The enzyme catalyses an N-acylsphing-4-enine + H2O = sphing-4-enine + a fatty acid. Functionally, hydrolyzes the sphingolipid ceramide into sphingosine and free fatty acid. This chain is Neutral ceramidase B (dcd2B), found in Dictyostelium discoideum (Social amoeba).